Reading from the N-terminus, the 378-residue chain is DNA replication and repair protein RecF (378 aa).

Residue 31 to 38 (GENGSGKT) participates in ATP binding.

The protein belongs to the RecF family.

It is found in the cytoplasm. In terms of biological role, the RecF protein is involved in DNA metabolism; it is required for DNA replication and normal SOS inducibility. RecF binds preferentially to single-stranded, linear DNA. It also seems to bind ATP. The chain is DNA replication and repair protein RecF from Teredinibacter turnerae (strain ATCC 39867 / T7901).